Consider the following 76-residue polypeptide: MQVLVRDNNVDQALRILKKKLQREGVFREMRLREAFEKPSIKKAREKAEAIGRQRKLARKQMQREGLLPTKPRKDK.

The disordered stretch occupies residues Gly-52–Lys-76.

This sequence belongs to the bacterial ribosomal protein bS21 family.

This is Small ribosomal subunit protein bS21C (rpsU3) from Agrobacterium fabrum (strain C58 / ATCC 33970) (Agrobacterium tumefaciens (strain C58)).